The primary structure comprises 197 residues: Imidazoleglycerol-phosphate dehydratase (197 aa).

Belongs to the imidazoleglycerol-phosphate dehydratase family.

It localises to the cytoplasm. The enzyme catalyses D-erythro-1-(imidazol-4-yl)glycerol 3-phosphate = 3-(imidazol-4-yl)-2-oxopropyl phosphate + H2O. The protein operates within amino-acid biosynthesis; L-histidine biosynthesis; L-histidine from 5-phospho-alpha-D-ribose 1-diphosphate: step 6/9. This Azorhizobium caulinodans (strain ATCC 43989 / DSM 5975 / JCM 20966 / LMG 6465 / NBRC 14845 / NCIMB 13405 / ORS 571) protein is Imidazoleglycerol-phosphate dehydratase.